A 786-amino-acid chain; its full sequence is Receptor-like protein 30 (786 aa).

Positions 1-30 are cleaved as a signal peptide; sequence MIPSQSNSFSGSVITLYFFLLGSLVLRTLA. Topologically, residues 31 to 739 are extracellular; it reads SSRLHYCRHD…SEPEEQVINW (709 aa). N-linked (GlcNAc...) asparagine glycans are attached at residues N67, N98, N115, and N133. LRR repeat units lie at residues 110 to 133, 134 to 158, 159 to 181, and 183 to 204; these read LQQL…SLGN, LSRL…VSKL, NQLR…SFTN, and TKLS…SFIL. N181, N199, and N206 each carry an N-linked (GlcNAc...) asparagine glycan. LRR repeat units lie at residues 207–231, 233–255, 257–279, 280–304, 305–328, 329–352, 354–375, 376–399, 400–423, 425–447, 448–472, 474–496, 497–524, and 526–546; these read LTSL…MSGL, NLKY…LFTI, SLQI…NISS, SSRL…ISEI, HSLI…ISKL, VNLQ…LWGL, TVTL…ALDG, ESMQ…ICKQ, RFLK…LKNS, YWLK…VFVN, ASML…LINC, GMEL…LVSL, PSLR…GFQH, and RLID…YFSN. Residue N276 is glycosylated (N-linked (GlcNAc...) asparagine). N-linked (GlcNAc...) asparagine glycosylation occurs at N338. Residues N413, N422, N434, N447, and N471 are each glycosylated (N-linked (GlcNAc...) asparagine). A glycan (N-linked (GlcNAc...) asparagine) is linked at N558. LRR repeat units lie at residues 596-621, 622-645, 646-669, and 671-694; these read IPYF…VGLL, KELR…LANL, TNLE…LGSL, and FLST…QFQS. Residues N628 and N644 are each glycosylated (N-linked (GlcNAc...) asparagine). The N-linked (GlcNAc...) asparagine glycan is linked to N676. Residues 740 to 760 form a helical membrane-spanning segment; sequence IAAAIAYGPGVFCGLVIGHIF. Topologically, residues 761 to 786 are cytoplasmic; that stretch reads FTAHKHEWFMEKFHRNKRRVVTTSAR.

It belongs to the RLP family.

The protein resides in the cell membrane. Functionally, receptor for microbe-associated molecular patterns (MAMPs) that induces a BAK1-dependent basal immune response to necrotrophic fungi (e.g. S.sclerotiorum) in the presence of MAMPs (e.g. flg22 and SCLEROTINIA CULTURE FILTRATE ELICITOR1 (SCFE1) from the necrotrophic fungal pathogen S.sclerotiorum). Functionality seems to depend on the presence of the receptor kinase SOBIR1 as an adapter protein. Required for full non-host resistance to bacterial pathogens (e.g. P.syringae pv phaseolicola). The sequence is that of Receptor-like protein 30 from Arabidopsis thaliana (Mouse-ear cress).